A 221-amino-acid polypeptide reads, in one-letter code: 5'-nucleotidase (221 aa).

D14 serves as the catalytic Nucleophile.

This sequence belongs to the HAD-like hydrolase superfamily. The cofactor is Mn(2+). It depends on Mg(2+) as a cofactor.

It catalyses the reaction a ribonucleoside 5'-phosphate + H2O = a ribonucleoside + phosphate. Specifically dephosphorylates nucleoside 5'-monophosphates to nucleosides and inorganic phosphate. Displays high activity toward 5'-UMP and 5'-IMP, significant activity against 5'-XMP and 5'-TMP, and low activity against 5'-CMP. The sequence is that of 5'-nucleotidase from Pseudomonas aeruginosa (strain ATCC 15692 / DSM 22644 / CIP 104116 / JCM 14847 / LMG 12228 / 1C / PRS 101 / PAO1).